Reading from the N-terminus, the 639-residue chain is MSNMDFLPISKEDLKKRNIDVLDFIIVTGDAYVDHPSFGTAIIGRVLEREGFTVGIIAQPNWNNIEDFKKLGKPKYGFLVNSGNIDSMVNHYTASKKKRHDDFYSPGGKSGYRPDRAVIVYCNKIKEAFKDSPIIIGGIEASLRRFAHYDYWDNSVRRSILEDSSADLLIYGMGEKPIVQVSNLLRYGMKIDSIKNVRGTTYIERDISPLKDYIEIPSFEEVSTNKKSYAEAYKIQYYEQDSIRGKTLVQKHKERYVVQNPPQPPLSQEEMDEVYALPYARTYHPMYEAEGGIPAIKEVKFSITSHRGCYGSCSFCALTFHQGRVIQNRSQDSILKEANMMTNMKDFKGYIHDVGGPTANFRHRACKVQEEHGTCKNKQCVFPKACKNLIIDHKEYLSLLKKIRKIPNVKKVFIRSGIRFDYLMYDKNDEFFKELCEHHISGQLKVAPEHISDKVLNLMGKPTRNVYDSFVKKYYDINKKIHKNQFLVPYLMSSHPGSDLKAAIELAQYIKKMGYTPEQVQDFYPTPGSLSTTMYYTGINPLTEEKVYVPKEQKEKRMQRSLLQFSIPDNYDLVKEALIKAHREDLIGNGPDCLIPYNKPYKKSHKKNNAKNKNNNYNKNKDVSKKNKKNSLSKHKKRK.

In terms of domain architecture, Radical SAM core spans 295 to 566 (AIKEVKFSIT…RMQRSLLQFS (272 aa)). The [4Fe-4S] cluster site is built by C309, C313, and C316. The disordered stretch occupies residues 597–639 (YNKPYKKSHKKNNAKNKNNNYNKNKDVSKKNKKNSLSKHKKRK). Basic residues-rich tracts occupy residues 600-610 (PYKKSHKKNNA) and 626-639 (KNKKNSLSKHKKRK).

This sequence belongs to the UPF0313 family. It depends on [4Fe-4S] cluster as a cofactor.

The sequence is that of UPF0313 protein CLJ_B0249 from Clostridium botulinum (strain 657 / Type Ba4).